The chain runs to 151 residues: 1,4-dihydroxy-2-naphthoyl-CoA hydrolase (151 aa).

Asp23 is a catalytic residue.

Belongs to the 4-hydroxybenzoyl-CoA thioesterase family. DHNA-CoA hydrolase subfamily.

It carries out the reaction 1,4-dihydroxy-2-naphthoyl-CoA + H2O = 1,4-dihydroxy-2-naphthoate + CoA + H(+). Its pathway is cofactor biosynthesis; phylloquinone biosynthesis. It participates in quinol/quinone metabolism; 1,4-dihydroxy-2-naphthoate biosynthesis; 1,4-dihydroxy-2-naphthoate from chorismate: step 7/7. Functionally, catalyzes the hydrolysis of 1,4-dihydroxy-2-naphthoyl-CoA (DHNA-CoA) to 1,4-dihydroxy-2-naphthoate (DHNA), a reaction involved in phylloquinone (vitamin K1) biosynthesis. The chain is 1,4-dihydroxy-2-naphthoyl-CoA hydrolase from Prochlorococcus marinus (strain MIT 9211).